A 105-amino-acid chain; its full sequence is Large ribosomal subunit protein uL24 (105 aa).

This sequence belongs to the universal ribosomal protein uL24 family. In terms of assembly, part of the 50S ribosomal subunit.

Its function is as follows. One of two assembly initiator proteins, it binds directly to the 5'-end of the 23S rRNA, where it nucleates assembly of the 50S subunit. One of the proteins that surrounds the polypeptide exit tunnel on the outside of the subunit. The polypeptide is Large ribosomal subunit protein uL24 (Aeromonas hydrophila subsp. hydrophila (strain ATCC 7966 / DSM 30187 / BCRC 13018 / CCUG 14551 / JCM 1027 / KCTC 2358 / NCIMB 9240 / NCTC 8049)).